Consider the following 399-residue polypeptide: P2X purinoceptor 1 (399 aa).

At 1 to 28 (MARRLQDELSAFFFEYDTPRMVLVRNKK) the chain is on the cytoplasmic side. A helical membrane pass occupies residues 29–50 (VGVIFRLIQLVVLVYVIGWVFV). Residues 51–338 (YEKGYQTSSG…IPTMTTIGSG (288 aa)) lie on the Extracellular side of the membrane. CTP contacts are provided by lysine 68, lysine 70, and lysine 140. Lysine 70 provides a ligand contact to ATP. Cystine bridges form between cysteine 117–cysteine 165, cysteine 126–cysteine 149, and cysteine 132–cysteine 159. Asparagine 153 and asparagine 184 each carry an N-linked (GlcNAc...) asparagine glycan. CTP is bound at residue threonine 186. Threonine 186 is a binding site for ATP. Asparagine 210 is a glycosylation site (N-linked (GlcNAc...) asparagine). 2 disulfide bridges follow: cysteine 217/cysteine 227 and cysteine 261/cysteine 270. ATP-binding residues include serine 286, asparagine 290, and arginine 292. Residues asparagine 290 and arginine 292 each coordinate CTP. Asparagine 300 carries an N-linked (GlcNAc...) asparagine glycan. A CTP-binding site is contributed by lysine 309. Lysine 309 is a binding site for ATP. Positions 331 to 338 (TMTTIGSG) are pore-forming motif. A helical membrane pass occupies residues 339–358 (IGIFGVATVLCDLLLLHILP). Residues 359 to 399 (KRHYYKQKKFKYAEDMGPGEGERDPAATSSTLGLQENMRTS) lie on the Cytoplasmic side of the membrane. The tract at residues 374 to 399 (MGPGEGERDPAATSSTLGLQENMRTS) is disordered. Residues 385–399 (ATSSTLGLQENMRTS) are compositionally biased toward polar residues. Residues serine 387 and serine 388 each carry the phosphoserine modification. Phosphothreonine is present on threonine 389.

Belongs to the P2X receptor family. Functional P2XRs are organized as homomeric and heteromeric trimers. Forms heterodimer with P2RX2. Forms heterodimer with P2RX4. Forms heterodimer with P2RX5. As to expression, expressed in smooth muscle of the bladder and arteries.

The protein localises to the cell membrane. The catalysed reaction is Ca(2+)(in) = Ca(2+)(out). It catalyses the reaction K(+)(in) = K(+)(out). It carries out the reaction Na(+)(in) = Na(+)(out). Activated by low concentrations of ATP (&lt;1 uM). Undergoes rapid desensitisation. Sensitives to the ATP agonist:alpha/beta-methylene-ATP. Modulated by cholesterol. In terms of biological role, ATP-gated nonselective transmembrane cation channel permeable to potassium, sodium and with relatively high calcium permeability. Furthermore, CTP functions as a weak affinity agonist for P2RX1. Plays a role in male fertility, bladder contraction and platelet aggregation. Specifically, plays an important role in neurogenic contraction of smooth muscle of the vas deferens, and therefore is essential for normal male reproductive function. In addition, contributes to smooth muscle contractions of the urinary bladder. On platelets, contributes to platelet activation and aggregation and thereby, also to thrombosis. On neutrophils, it is involved in chemotaxis and in mitigating the activation of circulating cells. This Mus musculus (Mouse) protein is P2X purinoceptor 1 (P2rx1).